Consider the following 309-residue polypeptide: MEMO1 family protein C4H3.04c (309 aa).

It belongs to the MEMO1 family.

This Schizosaccharomyces pombe (strain 972 / ATCC 24843) (Fission yeast) protein is MEMO1 family protein C4H3.04c.